Reading from the N-terminus, the 244-residue chain is 1-(5-phosphoribosyl)-5-[(5-phosphoribosylamino)methylideneamino] imidazole-4-carboxamide isomerase (244 aa).

Asp10 serves as the catalytic Proton acceptor. Asp132 serves as the catalytic Proton donor.

Belongs to the HisA/HisF family.

It localises to the cytoplasm. The enzyme catalyses 1-(5-phospho-beta-D-ribosyl)-5-[(5-phospho-beta-D-ribosylamino)methylideneamino]imidazole-4-carboxamide = 5-[(5-phospho-1-deoxy-D-ribulos-1-ylimino)methylamino]-1-(5-phospho-beta-D-ribosyl)imidazole-4-carboxamide. Its pathway is amino-acid biosynthesis; L-histidine biosynthesis; L-histidine from 5-phospho-alpha-D-ribose 1-diphosphate: step 4/9. The polypeptide is 1-(5-phosphoribosyl)-5-[(5-phosphoribosylamino)methylideneamino] imidazole-4-carboxamide isomerase (Xanthomonas campestris pv. campestris (strain 8004)).